The chain runs to 179 residues: ATP synthase subunit delta (179 aa).

Belongs to the ATPase delta chain family. In terms of assembly, F-type ATPases have 2 components, F(1) - the catalytic core - and F(0) - the membrane proton channel. F(1) has five subunits: alpha(3), beta(3), gamma(1), delta(1), epsilon(1). F(0) has three main subunits: a(1), b(2) and c(10-14). The alpha and beta chains form an alternating ring which encloses part of the gamma chain. F(1) is attached to F(0) by a central stalk formed by the gamma and epsilon chains, while a peripheral stalk is formed by the delta and b chains.

It is found in the cell inner membrane. Its function is as follows. F(1)F(0) ATP synthase produces ATP from ADP in the presence of a proton or sodium gradient. F-type ATPases consist of two structural domains, F(1) containing the extramembraneous catalytic core and F(0) containing the membrane proton channel, linked together by a central stalk and a peripheral stalk. During catalysis, ATP synthesis in the catalytic domain of F(1) is coupled via a rotary mechanism of the central stalk subunits to proton translocation. In terms of biological role, this protein is part of the stalk that links CF(0) to CF(1). It either transmits conformational changes from CF(0) to CF(1) or is implicated in proton conduction. This chain is ATP synthase subunit delta, found in Burkholderia pseudomallei (strain 1710b).